The sequence spans 256 residues: Ubiquinone/menaquinone biosynthesis C-methyltransferase UbiE (256 aa).

Over residues 1–12 the composition is skewed to basic and acidic residues; that stretch reads MTDPRKGDHAEP. The disordered stretch occupies residues 1–21; that stretch reads MTDPRKGDHAEPTTHFGYQDV. S-adenosyl-L-methionine-binding positions include Thr-79, Asp-100, and 128-129; that span reads DA.

It belongs to the class I-like SAM-binding methyltransferase superfamily. MenG/UbiE family.

It catalyses the reaction a 2-demethylmenaquinol + S-adenosyl-L-methionine = a menaquinol + S-adenosyl-L-homocysteine + H(+). The catalysed reaction is a 2-methoxy-6-(all-trans-polyprenyl)benzene-1,4-diol + S-adenosyl-L-methionine = a 5-methoxy-2-methyl-3-(all-trans-polyprenyl)benzene-1,4-diol + S-adenosyl-L-homocysteine + H(+). Its pathway is quinol/quinone metabolism; menaquinone biosynthesis; menaquinol from 1,4-dihydroxy-2-naphthoate: step 2/2. It functions in the pathway cofactor biosynthesis; ubiquinone biosynthesis. In terms of biological role, methyltransferase required for the conversion of demethylmenaquinol (DMKH2) to menaquinol (MKH2) and the conversion of 2-polyprenyl-6-methoxy-1,4-benzoquinol (DDMQH2) to 2-polyprenyl-3-methyl-6-methoxy-1,4-benzoquinol (DMQH2). The polypeptide is Ubiquinone/menaquinone biosynthesis C-methyltransferase UbiE (Pseudomonas entomophila (strain L48)).